The primary structure comprises 89 residues: Large ribosomal subunit protein bL31B (89 aa).

The protein belongs to the bacterial ribosomal protein bL31 family. Type B subfamily. Part of the 50S ribosomal subunit.

This Corynebacterium aurimucosum (strain ATCC 700975 / DSM 44827 / CIP 107346 / CN-1) (Corynebacterium nigricans) protein is Large ribosomal subunit protein bL31B.